The chain runs to 369 residues: Beta-1,3-galactosyltransferase 9 (369 aa).

The Cytoplasmic portion of the chain corresponds to Met-1–Gln-12. Residues Trp-13 to Val-33 traverse the membrane as a helical; Signal-anchor for type II membrane protein segment. Topologically, residues Glu-34 to Asp-369 are lumenal. N-linked (GlcNAc...) asparagine glycans are attached at residues Asn-66, Asn-96, and Asn-109.

This sequence belongs to the glycosyltransferase 31 family.

The protein resides in the golgi apparatus membrane. Functionally, putative glycosyltransferase that could catalyze the transfer of galactose residues from UDP-alpha-D-galactose. This chain is Beta-1,3-galactosyltransferase 9, found in Homo sapiens (Human).